The following is a 372-amino-acid chain: Chaperone protein DnaJ (372 aa).

Positions 5 to 69 (DYYEVLGLTK…QKKARYDQFG (65 aa)) constitute a J domain. A CR-type zinc finger spans residues 129–211 (GKETEIEIPK…CRGEGKVQKR (83 aa)). Residues Cys142, Cys145, Cys159, Cys162, Cys185, Cys188, Cys199, and Cys202 each contribute to the Zn(2+) site. CXXCXGXG motif repeat units lie at residues 142-149 (CETCHGSG), 159-166 (CSTCNGAG), 185-192 (CTTCHGTG), and 199-206 (CSTCRGEG).

This sequence belongs to the DnaJ family. In terms of assembly, homodimer. Requires Zn(2+) as cofactor.

It is found in the cytoplasm. Participates actively in the response to hyperosmotic and heat shock by preventing the aggregation of stress-denatured proteins and by disaggregating proteins, also in an autonomous, DnaK-independent fashion. Unfolded proteins bind initially to DnaJ; upon interaction with the DnaJ-bound protein, DnaK hydrolyzes its bound ATP, resulting in the formation of a stable complex. GrpE releases ADP from DnaK; ATP binding to DnaK triggers the release of the substrate protein, thus completing the reaction cycle. Several rounds of ATP-dependent interactions between DnaJ, DnaK and GrpE are required for fully efficient folding. Also involved, together with DnaK and GrpE, in the DNA replication of plasmids through activation of initiation proteins. The polypeptide is Chaperone protein DnaJ (Lysinibacillus sphaericus (strain C3-41)).